The chain runs to 392 residues: MQQICVLGSTGSIGISTLDVLASHPDKFSVYALTANSSIDLLVEQCLKFSPQYAVIRDEALYLPLKQRIESLNCTTEVLAGEQALCDVASAVQVDSVMAAIVGAAGLAPTLAAVEAGKRVLLANKESLVMSGKLFMQAAKAASALVLPIDSEHNAIFQCLPQPYTSLADAGVQKILLTGSGGPFRDTPLADLSAKTPDQACAHPNWSMGRKISVDSATMMNKGLEFIEACWLFDATPEQIEIVVHPQSIIHSMVQYVDGSVLAQMGNPDMRTPIAHCLDWPRRIDSGVASLDFFALQGLDFCRPDYQRFPALALATSAIKSGGTYPVALNAANEVAVALFLEEKIKFTDIAAIIAAVLEDWETCEPDTIAAVKEADAIARKLAYSVAAKFGY.

NADPH is bound by residues Thr10, Gly11, Ser12, Ile13, and Asn124. Lys125 is a 1-deoxy-D-xylulose 5-phosphate binding site. NADPH is bound at residue Glu126. Asp150 is a binding site for Mn(2+). Positions 151, 152, 180, and 203 each coordinate 1-deoxy-D-xylulose 5-phosphate. Residue Glu152 participates in Mn(2+) binding. An NADPH-binding site is contributed by Gly209. Residues Ser216, Asn221, Lys222, and Glu225 each coordinate 1-deoxy-D-xylulose 5-phosphate. Glu225 serves as a coordination point for Mn(2+).

It belongs to the DXR family. Mg(2+) is required as a cofactor. Mn(2+) serves as cofactor.

The catalysed reaction is 2-C-methyl-D-erythritol 4-phosphate + NADP(+) = 1-deoxy-D-xylulose 5-phosphate + NADPH + H(+). It functions in the pathway isoprenoid biosynthesis; isopentenyl diphosphate biosynthesis via DXP pathway; isopentenyl diphosphate from 1-deoxy-D-xylulose 5-phosphate: step 1/6. Catalyzes the NADPH-dependent rearrangement and reduction of 1-deoxy-D-xylulose-5-phosphate (DXP) to 2-C-methyl-D-erythritol 4-phosphate (MEP). The chain is 1-deoxy-D-xylulose 5-phosphate reductoisomerase from Saccharophagus degradans (strain 2-40 / ATCC 43961 / DSM 17024).